Here is a 232-residue protein sequence, read N- to C-terminus: MSQEKHWVMRLTWKVQEEVITKWQGIVRYWMNKRNLKWEYKMHYQITWAWYTMSRYVIPLPGSGEIHVDIYWHLAPKQGWLSTYAVGIQYVSLVNDKYRTELDPNTADSMIHCHYFTCFTDRAIQQALRGNRFIFCQFPGGHKLTGQVPSLQYLALLAHQNGLRKRSQRGETRRTRNLGSQQGAVGRMAQRYGRRNQQRSQTAFWPRTPIPSMELLSGGRGETGKTHSGKGI.

At threonine 100 the chain carries Phosphothreonine; by host. The short motif at 112-142 (HCHYFTCFTDRAIQQALRGNRFIFCQFPGGH) is the HCCH motif element. A Phosphoserine; by host modification is found at serine 150. The BC-box-like motif signature appears at 150 to 159 (SLQYLALLAH). A multimerization region spans residues 157–172 (LAHQNGLRKRSQRGET). The tract at residues 164–232 (RKRSQRGETR…TGKTHSGKGI (69 aa)) is disordered.

This sequence belongs to the primate lentivirus group Vif protein family. In terms of assembly, homomultimer; in vitro and presumably in vivo. Interacts with viral Pr55Gag precursor and host APOBEC3G. The interaction between Vif and APOBEC3G is species-specific, which may play a role in restricting the replication of SIV to their host. Forms an E3 ligase complex by interacting with host CUL5 and elongin BC complex (ELOB and ELOC). Processed in virion by the viral protease. Post-translationally, highly phosphorylated on serine and threonine residues. In terms of processing, polyubiquitinated and degraded by the proteasome in the presence of APOBEC3G.

It localises to the host cytoplasm. The protein localises to the host cell membrane. The protein resides in the virion. In terms of biological role, counteracts the innate antiviral activity of APOBEC3G. Forms a complex with host APOBEC3G thus preventing the entry of this lethally hypermutating enzyme into progeny virions. Functions as an adapter molecule, recruiting APOBEC3G to the ubiquitin-proteasome machinery. Targets APOBEC3G for degradation through the assembly with elongin BC complex, CUL5 and RBX1. Binds viral RNA and affects the stability of viral nucleoprotein core. May play a role in viral morphology. The polypeptide is Virion infectivity factor (vif) (Simian immunodeficiency virus agm.vervet (isolate AGM155) (SIV-agm.ver)).